Reading from the N-terminus, the 311-residue chain is Ornithine carbamoyltransferase (311 aa).

Carbamoyl phosphate is bound by residues 56–59 (STRT), Gln83, Arg107, and 134–137 (HPTQ). L-ornithine contacts are provided by residues Asn166, Asp230, and 234 to 235 (SM). Carbamoyl phosphate-binding positions include 270-271 (CL) and Lys298.

Belongs to the aspartate/ornithine carbamoyltransferase superfamily. OTCase family.

The protein resides in the cytoplasm. The catalysed reaction is carbamoyl phosphate + L-ornithine = L-citrulline + phosphate + H(+). Its pathway is amino-acid degradation; L-arginine degradation via ADI pathway; carbamoyl phosphate from L-arginine: step 2/2. Its function is as follows. Reversibly catalyzes the transfer of the carbamoyl group from carbamoyl phosphate (CP) to the N(epsilon) atom of ornithine (ORN) to produce L-citrulline. This Ignicoccus hospitalis (strain KIN4/I / DSM 18386 / JCM 14125) protein is Ornithine carbamoyltransferase.